Consider the following 131-residue polypeptide: MSSTVKAANWRFVEVGRVVLVDNKELATIVEIIDQKRVLIDGPKIQRQAIALAKIVLTPIVLPNLPRGSRTATVTKKWAAADIDAKWAASGWAKKLANKERRSQLSDFERFQVMVLKKQRRFATKKALVKA.

Belongs to the eukaryotic ribosomal protein eL14 family. Component of the large ribosomal subunit. Mature ribosomes consist of a small (40S) and a large (60S) subunit. The 40S subunit contains about 32 different proteins and 1 molecule of RNA (18S). The 60S subunit contains 45 different proteins and 3 molecules of RNA (25S, 5.8S and 5S).

Its subcellular location is the cytoplasm. In terms of biological role, component of the ribosome, a large ribonucleoprotein complex responsible for the synthesis of proteins in the cell. The small ribosomal subunit (SSU) binds messenger RNAs (mRNAs) and translates the encoded message by selecting cognate aminoacyl-transfer RNA (tRNA) molecules. The large subunit (LSU) contains the ribosomal catalytic site termed the peptidyl transferase center (PTC), which catalyzes the formation of peptide bonds, thereby polymerizing the amino acids delivered by tRNAs into a polypeptide chain. The nascent polypeptides leave the ribosome through a tunnel in the LSU and interact with protein factors that function in enzymatic processing, targeting, and the membrane insertion of nascent chains at the exit of the ribosomal tunnel. This is Large ribosomal subunit protein eL14 from Candida albicans (strain SC5314 / ATCC MYA-2876) (Yeast).